A 567-amino-acid polypeptide reads, in one-letter code: MKISRDAYANMYGPTVGDRIRLGDTELWIEIEKDHTHYGEEVVFGGGKVIRDGMGQSQLCSDSVMDTVITNVIIIDWWGIVKADVGLKDGRIVAIGKAGNPDTQPDVDIIIGAGTEIIAGENQILTAGAVDTHVHYICPQQVDEALMSGLTTMIGGGTGPATGSVATTNTPGPWHIGKMMQAVDDLPINIGFLGKGSASTPAALEEQVKAGVMSLKVHEDWAATPATIGNALDVADRYDIQVALHADSLNESGFVKDTLEAFKDRCIHSYHTEGAGGGHAPDIIVACGQPNVLPSSTNPTRPYTINTVDEHLDMLMECHHLDPNIPEDVAFADSRIRRETIAAEDILHDLGAISMISSDSQAMGRIGEVVCRTWQTAHKMRLQRGLLPEDQERGTDNFRVKRYIAKYTINPAITHGVSHEVGSVEIGKMADLVLWRPKFFGVKPSIILKGGMIAGAAMGDPNAAISTPQPVHYRRMFGALGRAVSATRVTFVSQAAMDTGLEEKLGLRSRLVACKNVRSMRKKDMKLNDYCPNITVDPETYEVRVDGVLLTCEPLSELPLAQLYHLF.

The 440-residue stretch at 128–567 (GAVDTHVHYI…LPLAQLYHLF (440 aa)) folds into the Urease domain. Ni(2+)-binding residues include histidine 133, histidine 135, and lysine 216. At lysine 216 the chain carries N6-carboxylysine. Histidine 218 contributes to the substrate binding site. Residues histidine 245 and histidine 271 each contribute to the Ni(2+) site. The active-site Proton donor is histidine 319. Aspartate 359 is a Ni(2+) binding site.

It belongs to the metallo-dependent hydrolases superfamily. Urease alpha subunit family. Heterotrimer of UreA (gamma), UreB (beta) and UreC (alpha) subunits. Three heterotrimers associate to form the active enzyme. Requires Ni cation as cofactor. Carboxylation allows a single lysine to coordinate two nickel ions.

It localises to the cytoplasm. The catalysed reaction is urea + 2 H2O + H(+) = hydrogencarbonate + 2 NH4(+). It functions in the pathway nitrogen metabolism; urea degradation; CO(2) and NH(3) from urea (urease route): step 1/1. The protein is Urease subunit alpha 1 of Psychrobacter cryohalolentis (strain ATCC BAA-1226 / DSM 17306 / VKM B-2378 / K5).